The chain runs to 35 residues: Putative gastric cancer-related gene 224 protein (35 aa).

Expressed in gastric mucosa.

This is Putative gastric cancer-related gene 224 protein (GCRG224) from Homo sapiens (Human).